Reading from the N-terminus, the 71-residue chain is DNA-directed RNA polymerases I, II, and III subunit RPABC5 (71 aa).

4 residues coordinate Zn(2+): C7, C10, C44, and C45.

The protein belongs to the archaeal Rpo10/eukaryotic RPB10 RNA polymerase subunit family. As to quaternary structure, component of the RNA polymerase I (Pol I), RNA polymerase II (Pol II) and RNA polymerase III (Pol III) complexes consisting of at least 13, 12 and 17 subunits, respectively.

The protein localises to the nucleus. Its function is as follows. DNA-dependent RNA polymerase catalyzes the transcription of DNA into RNA using the four ribonucleoside triphosphates as substrates. Common component of RNA polymerases I, II and III which synthesize ribosomal RNA precursors, mRNA precursors and many functional non-coding RNAs, and a small RNAs, such as 5S rRNA and tRNAs, respectively. Pol II is the central component of the basal RNA polymerase II transcription machinery. Pols are composed of mobile elements that move relative to each other. In Pol II, RBP10 is part of the core element with the central large cleft. The chain is DNA-directed RNA polymerases I, II, and III subunit RPABC5 from Brassica napus (Rape).